The primary structure comprises 194 residues: Crossover junction endodeoxyribonuclease RuvC (194 aa).

Residues D8, E72, and D144 contribute to the active site. Positions 8, 72, and 144 each coordinate Mg(2+).

It belongs to the RuvC family. In terms of assembly, homodimer which binds Holliday junction (HJ) DNA. The HJ becomes 2-fold symmetrical on binding to RuvC with unstacked arms; it has a different conformation from HJ DNA in complex with RuvA. In the full resolvosome a probable DNA-RuvA(4)-RuvB(12)-RuvC(2) complex forms which resolves the HJ. Mg(2+) is required as a cofactor.

It is found in the cytoplasm. It carries out the reaction Endonucleolytic cleavage at a junction such as a reciprocal single-stranded crossover between two homologous DNA duplexes (Holliday junction).. In terms of biological role, the RuvA-RuvB-RuvC complex processes Holliday junction (HJ) DNA during genetic recombination and DNA repair. Endonuclease that resolves HJ intermediates. Cleaves cruciform DNA by making single-stranded nicks across the HJ at symmetrical positions within the homologous arms, yielding a 5'-phosphate and a 3'-hydroxyl group; requires a central core of homology in the junction. The consensus cleavage sequence is 5'-(A/T)TT(C/G)-3'. Cleavage occurs on the 3'-side of the TT dinucleotide at the point of strand exchange. HJ branch migration catalyzed by RuvA-RuvB allows RuvC to scan DNA until it finds its consensus sequence, where it cleaves and resolves the cruciform DNA. In Psychrobacter arcticus (strain DSM 17307 / VKM B-2377 / 273-4), this protein is Crossover junction endodeoxyribonuclease RuvC.